The sequence spans 250 residues: MLLAIDVGNTNTVVGVFDGDDLADSWRVRTDPHATADELVLLYRGLLGEHRITGVSICSTVPAALRELRRMVVRAFRDLPVVIVEPGTRTGVPILIDNPKEAGADRIMNTLAAHHLYGGPAIVVDFGTSTNLDVVSARGEFIGGVLAPGIEIALDALASRAAQLRKVELTPPRSVIGKSTVEALQSGMIYGVAGQVDGLVRRIRAELGAHATAIATGGLASLVVKESETLDRHEPHLTLIGLRLVFEKNI.

Position 6-13 (6-13 (DVGNTNTV)) interacts with ATP. 103–106 (GADR) is a binding site for substrate. Aspartate 105 (proton acceptor) is an active-site residue. Residue aspartate 125 participates in K(+) binding. Threonine 128 contacts ATP. Threonine 180 contributes to the substrate binding site.

It belongs to the type III pantothenate kinase family. Homodimer. NH4(+) is required as a cofactor. The cofactor is K(+).

It localises to the cytoplasm. It catalyses the reaction (R)-pantothenate + ATP = (R)-4'-phosphopantothenate + ADP + H(+). Its pathway is cofactor biosynthesis; coenzyme A biosynthesis; CoA from (R)-pantothenate: step 1/5. Its function is as follows. Catalyzes the phosphorylation of pantothenate (Pan), the first step in CoA biosynthesis. This chain is Type III pantothenate kinase, found in Frankia alni (strain DSM 45986 / CECT 9034 / ACN14a).